A 300-amino-acid chain; its full sequence is Ribonuclease HIII (300 aa).

The region spanning 83-300 is the RNase H type-2 domain; the sequence is IPIIGSDEVG…THKAQALLTK (218 aa). 3 residues coordinate a divalent metal cation: Asp-89, Glu-90, and Asp-194.

The protein belongs to the RNase HII family. RnhC subfamily. Requires Mn(2+) as cofactor. It depends on Mg(2+) as a cofactor.

The protein localises to the cytoplasm. The catalysed reaction is Endonucleolytic cleavage to 5'-phosphomonoester.. Functionally, endonuclease that specifically degrades the RNA of RNA-DNA hybrids. This chain is Ribonuclease HIII, found in Streptococcus pyogenes serotype M1.